Here is a 245-residue protein sequence, read N- to C-terminus: MEGWQRAFVLHGRPWSETSLLLDLFSEQHGRVRVLAKGARAKRSSLKGALQPFTPLLVRWSGRGEVKTLRSAEPVSLALPLSGTTLYCGLYVNELLSRVLQHETAFSELFFDYLNCIQTLAADPPSPEPALRRFELSMLGHLGYGVDFLHCAGSGEEIADGMTYSYREEKGFIASLVTGHRSFTGRQLRALSTREFPDADTLRAAKRFTRIALKPWLGGKPLKSSELFRQFLPRKPANAAPADEE.

The protein belongs to the RecO family.

In terms of biological role, involved in DNA repair and RecF pathway recombination. This chain is DNA repair protein RecO, found in Erwinia tasmaniensis (strain DSM 17950 / CFBP 7177 / CIP 109463 / NCPPB 4357 / Et1/99).